A 65-amino-acid polypeptide reads, in one-letter code: MPKMKSHRGAAKRFKKTGTGKLKRAKAFKSHILTKKSPKTKRNLRKGGYVSKSEEKVMKKLLPYL.

The segment at 1 to 25 (MPKMKSHRGAAKRFKKTGTGKLKRA) is disordered.

This sequence belongs to the bacterial ribosomal protein bL35 family.

The polypeptide is Large ribosomal subunit protein bL35 (Clostridium botulinum (strain Alaska E43 / Type E3)).